The primary structure comprises 352 residues: Popeye domain-containing protein 1 (352 aa).

At 1–38 (MSNTTSALPSSVPAVSLDPNATLCQDWEQSHHLLFHLA) the chain is on the extracellular side. N-linked (GlcNAc...) asparagine glycans are attached at residues N3 and N20. The chain crosses the membrane as a helical span at residues 39-59 (NLSLGLGFLIPTTLALHMIFL). Position 60 (R60) is a topological domain, cytoplasmic. Residues 61–81 (LLLMTGCSLFIAWATLYRCTL) traverse the membrane as a helical segment. A topological domain (extracellular) is located at residue D82. The chain crosses the membrane as a helical span at residues 83 to 103 (VMVWNVVFLLVNFMHFFFLLY). The Cytoplasmic portion of the chain corresponds to 104–352 (KRRPIKIDRE…NVSKTTKKDI (249 aa)). The segment at 299 to 352 (ILRGGSTGSSLQKNPLTKTSTTMKPIEEGLEDDVFESESPTTSQNVSKTTKKDI) is disordered. 2 stretches are compositionally biased toward polar residues: residues 306–321 (GSSL…STTM) and 336–346 (ESPTTSQNVSK).

This sequence belongs to the popeye family. Expressed in skeletal muscle (at protein level).

The protein localises to the lateral cell membrane. It is found in the cell junction. The protein resides in the tight junction. It localises to the membrane. Its subcellular location is the cell membrane. The protein localises to the sarcolemma. It is found in the caveola. Functionally, cell adhesion molecule involved in the establishment and/or maintenance of cell integrity. Involved in skeletal muscle and heart development as well as in the maintenance of heart function. May play a role in vamp3-mediated vesicular transport and recycling of receptor molecules. Involved in the formation and regulation of the tight junction (TJ) paracellular permeability barrier in epithelial cells. May induce primordial adhesive contact and aggregation of epithelial cells in a Ca(2+)-independent manner. May be involved in epithelial movement during corneal sheet formation and regeneration. May play a role in the regulation of cell shape and movement by modulating the Rho-GTPase activity. May also be involved in striated muscle regeneration and in the regulation of cell spreading. In Danio rerio (Zebrafish), this protein is Popeye domain-containing protein 1 (popdc1).